The following is a 418-amino-acid chain: Trans-acting enoyl reductase (418 aa).

This sequence belongs to the saccharopine dehydrogenase family. Enoyl reductase subfamily.

In terms of biological role, involved in the reduction of the double bond between C-4 and C-5 during phthiocerol dimycocerosates (DIM A) and glycosylated phenolphthiocerol dimycocerosates (PGL) biosynthesis. This chain is Trans-acting enoyl reductase, found in Mycobacterium tuberculosis (strain ATCC 25177 / H37Ra).